Here is a 184-residue protein sequence, read N- to C-terminus: Photosystem I assembly protein Ycf4 (184 aa).

The next 2 helical transmembrane spans lie at 22–42 and 57–77; these read FCWA…GTSS and ILFF…LFIS.

It belongs to the Ycf4 family.

The protein resides in the plastid. The protein localises to the chloroplast thylakoid membrane. In terms of biological role, seems to be required for the assembly of the photosystem I complex. In Chloranthus spicatus (Chulantree), this protein is Photosystem I assembly protein Ycf4.